Reading from the N-terminus, the 329-residue chain is Delta(7)-sterol 5(6)-desaturase erg32 (329 aa).

2 helical membrane-spanning segments follow: residues 67 to 87 (LFLI…SFAY) and 149 to 169 (FYLF…IYWI). The 126-residue stretch at 156–281 (ALFLLFSDFL…FFTLFDRLCS (126 aa)) folds into the Fatty acid hydroxylase domain. A Histidine box-1 motif is present at residues 170-175 (HRALHH). The short motif at 183-187 (HKLHH) is the Histidine box-2 element. Residues 210-230 (LPYHMFPFFFPLNKYVYLLLF) form a helical membrane-spanning segment. Residues 257 to 262 (HHAAHH) carry the Histidine box-3 motif.

It belongs to the sterol desaturase family. It depends on Fe cation as a cofactor.

The protein localises to the endoplasmic reticulum membrane. Its subcellular location is the golgi apparatus membrane. It carries out the reaction episterol + 2 Fe(II)-[cytochrome b5] + O2 + 2 H(+) = 5-dehydroepisterol + 2 Fe(III)-[cytochrome b5] + 2 H2O. Its pathway is steroid metabolism; ergosterol biosynthesis. Functionally, C-5 sterol desaturase; part of the third module of ergosterol biosynthesis pathway that includes by the late steps of the pathway. Erg31 and erg32 catalyze the introduction of a C-5 double bond in the B ring to produce 5-dehydroepisterol. The third module or late pathway involves the ergosterol synthesis itself through consecutive reactions that mainly occur in the endoplasmic reticulum (ER) membrane. Firstly, the squalene synthase erg9 catalyzes the condensation of 2 farnesyl pyrophosphate moieties to form squalene, which is the precursor of all steroids. Secondly, squalene is converted into lanosterol by the consecutive action of the squalene epoxidase erg1 and the lanosterol synthase erg7. The lanosterol 14-alpha-demethylase erg11/cyp1 catalyzes C14-demethylation of lanosterol to produce 4,4'-dimethyl cholesta-8,14,24-triene-3-beta-ol. In the next steps, a complex process involving various demethylation, reduction and desaturation reactions catalyzed by the C-14 reductase erg24 and the C-4 demethylation complex erg25-erg26-erg27 leads to the production of zymosterol. Erg28 likely functions in the C-4 demethylation complex reaction by tethering erg26 and Erg27 to the endoplasmic reticulum or to facilitate interaction between these proteins. Then, the sterol 24-C-methyltransferase erg6 catalyzes the methyl transfer from S-adenosyl-methionine to the C-24 of zymosterol to form fecosterol. The C-8 sterol isomerase erg2 catalyzes the reaction which results in unsaturation at C-7 in the B ring of sterols and thus converts fecosterol to episterol. The sterol-C5-desaturases erg31 and erg32 then catalyze the introduction of a C-5 double bond in the B ring to produce 5-dehydroepisterol. The C-22 sterol desaturase erg5 further converts 5-dehydroepisterol into ergosta-5,7,22,24(28)-tetraen-3beta-ol by forming the C-22(23) double bond in the sterol side chain. Finally, ergosta-5,7,22,24(28)-tetraen-3beta-ol is substrate of the C-24(28) sterol reductase erg4 to produce ergosterol. In the genus Schizosaccharomyces, a second route exists between lanosterol and fecosterol, via the methylation of lanosterol to eburicol by erg6, followed by C14-demethylation by erg11/cyp1 and C4-demethylation by the demethylation complex erg25-erg26-erg27. In Schizosaccharomyces pombe (strain 972 / ATCC 24843) (Fission yeast), this protein is Delta(7)-sterol 5(6)-desaturase erg32.